Here is a 238-residue protein sequence, read N- to C-terminus: 1-(5-phosphoribosyl)-5-[(5-phosphoribosylamino)methylideneamino] imidazole-4-carboxamide isomerase (238 aa).

The active-site Proton acceptor is the aspartate 8. Residue aspartate 130 is the Proton donor of the active site.

Belongs to the HisA/HisF family.

It is found in the cytoplasm. It catalyses the reaction 1-(5-phospho-beta-D-ribosyl)-5-[(5-phospho-beta-D-ribosylamino)methylideneamino]imidazole-4-carboxamide = 5-[(5-phospho-1-deoxy-D-ribulos-1-ylimino)methylamino]-1-(5-phospho-beta-D-ribosyl)imidazole-4-carboxamide. It participates in amino-acid biosynthesis; L-histidine biosynthesis; L-histidine from 5-phospho-alpha-D-ribose 1-diphosphate: step 4/9. The chain is 1-(5-phosphoribosyl)-5-[(5-phosphoribosylamino)methylideneamino] imidazole-4-carboxamide isomerase from Methanococcus vannielii (strain ATCC 35089 / DSM 1224 / JCM 13029 / OCM 148 / SB).